Reading from the N-terminus, the 600-residue chain is Prostaglandin G/H synthase 1 (600 aa).

The N-terminal stretch at 1–24 (MSRQGISLRFPLLLLLLSPSPVLP) is a signal peptide. One can recognise an EGF-like domain in the interval 32 to 70 (PVNPCCYYPCQHQGICVRFGLDRYQCDCTRTGYYGPNCT). 4 disulfide bridges follow: Cys-36/Cys-47, Cys-37/Cys-159, Cys-41/Cys-57, and Cys-59/Cys-69. Residues Asn-68, Asn-104, and Asn-144 are each glycosylated (N-linked (GlcNAc...) asparagine). The Proton acceptor role is filled by His-207. Tyr-385 serves as the catalytic For cyclooxygenase activity. Residue His-388 coordinates heme b. Residue Asn-410 is glycosylated (N-linked (GlcNAc...) asparagine). Cys-569 and Cys-575 form a disulfide bridge.

This sequence belongs to the prostaglandin G/H synthase family. Homodimer. Heme b serves as cofactor.

It localises to the microsome membrane. The protein localises to the endoplasmic reticulum membrane. It catalyses the reaction (5Z,8Z,11Z,14Z)-eicosatetraenoate + AH2 + 2 O2 = prostaglandin H2 + A + H2O. It carries out the reaction (5Z,8Z,11Z,14Z)-eicosatetraenoate + 2 O2 = prostaglandin G2. The catalysed reaction is prostaglandin G2 + AH2 = prostaglandin H2 + A + H2O. The enzyme catalyses (9Z,12Z)-octadecadienoate + AH2 + O2 = (9R)-hydroxy-(10E,12Z)-octadecadienoate + A + H2O. It catalyses the reaction (9Z,12Z)-octadecadienoate + AH2 + O2 = (9S)-hydroxy-(10E,12Z)-octadecadienoate + A + H2O. It carries out the reaction (9Z,12Z)-octadecadienoate + AH2 + O2 = (13S)-hydroxy-(9Z,11E)-octadecadienoate + A + H2O. The catalysed reaction is (9Z,12Z)-octadecadienoate + AH2 + O2 = (13R)-hydroxy-(9Z,11E)-octadecadienoate + A + H2O. The protein operates within lipid metabolism; prostaglandin biosynthesis. The cyclooxygenase activity is inhibited by nonsteroidal anti-inflammatory drugs (NSAIDs) including ibuprofen, flurbiprofen, ketoprofen, naproxen, flurbiprofen, anirolac, fenclofenac and diclofenac. Functionally, dual cyclooxygenase and peroxidase that plays an important role in the biosynthesis pathway of prostanoids, a class of C20 oxylipins mainly derived from arachidonate ((5Z,8Z,11Z,14Z)-eicosatetraenoate, AA, C20:4(n-6)), with a particular role in the inflammatory response. The cyclooxygenase activity oxygenates AA to the hydroperoxy endoperoxide prostaglandin G2 (PGG2), and the peroxidase activity reduces PGG2 to the hydroxy endoperoxide prostaglandin H2 (PGH2), the precursor of all 2-series prostaglandins and thromboxanes. This complex transformation is initiated by abstraction of hydrogen at carbon 13 (with S-stereochemistry), followed by insertion of molecular O2 to form the endoperoxide bridge between carbon 9 and 11 that defines prostaglandins. The insertion of a second molecule of O2 (bis-oxygenase activity) yields a hydroperoxy group in PGG2 that is then reduced to PGH2 by two electrons. Involved in the constitutive production of prostanoids in particular in the stomach and platelets. In gastric epithelial cells, it is a key step in the generation of prostaglandins, such as prostaglandin E2 (PGE2), which plays an important role in cytoprotection. In platelets, it is involved in the generation of thromboxane A2 (TXA2), which promotes platelet activation and aggregation, vasoconstriction and proliferation of vascular smooth muscle cells. Can also use linoleate (LA, (9Z,12Z)-octadecadienoate, C18:2(n-6)) as substrate and produce hydroxyoctadecadienoates (HODEs) in a regio- and stereospecific manner, being (9R)-HODE ((9R)-hydroxy-(10E,12Z)-octadecadienoate) and (13S)-HODE ((13S)-hydroxy-(9Z,11E)-octadecadienoate) its major products. The sequence is that of Prostaglandin G/H synthase 1 (PTGS1) from Bos taurus (Bovine).